We begin with the raw amino-acid sequence, 438 residues long: Cell division cycle-associated 7-like protein (438 aa).

The short motif at 9–33 (IPKEVADIFSAPSDDEEFVGFQDDV) is the Integrase domain-binding motif 1 (IBM1) element. Ser-21 is modified (phosphoserine). The PSIP1-binding stretch occupies residues 56-115 (VCFRSKYFTEELRRIFKEDTDSEMEDFEGFTESELNMSSNPELMESELSDSDKAYPVMND). An Integrase domain-binding motif 2 (IBM2) motif is present at residues 63 to 89 (FTEELRRIFKEDTDSEMEDFEGFTESE). Positions 74 to 199 (DTDSEMEDFE…ESRAESQENS (126 aa)) are disordered. Position 75 is a phosphothreonine (Thr-75). Acidic residues predominate over residues 75-86 (TDSEMEDFEGFT). A Phosphoserine modification is found at Ser-77. Thr-86 bears the Phosphothreonine mark. Ser-101, Ser-104, Ser-135, Ser-136, and Ser-159 each carry phosphoserine. Residues 152–167 (RTPDKDSSHLLDSKTD) show a composition bias toward basic and acidic residues. Over residues 168 to 177 (LRRKKSSRQP) the composition is skewed to basic residues. Phosphoserine occurs at positions 183 and 185. Positions 201-223 (ALLKRAMNIKENKAMLAQLLAEL) are MYC-binding. Glycyl lysine isopeptide (Lys-Gly) (interchain with G-Cter in SUMO2) cross-links involve residues Lys-210 and Lys-213. Ser-249 carries the phosphoserine modification.

As to quaternary structure, interacts with MYC. Interacts (via IBM motifs) with PSIP1 (via IBD domain); phosphorylation increases its affinity for PSIP1. Phosphorylation increases its interaction with PSIP1. As to expression, expressed in all tissues but not detected in total brain.

The protein localises to the cytoplasm. The protein resides in the nucleus. Plays a role in transcriptional regulation as a repressor that inhibits monoamine oxidase A (MAOA) activity and gene expression by binding to the promoter. Plays an important oncogenic role in mediating the full transforming effect of MYC in medulloblastoma cells. Involved in apoptotic signaling pathways; May act downstream of P38-kinase and BCL-2, but upstream of CASP3/caspase-3 as well as CCND1/cyclin D1 and E2F1. This Mus musculus (Mouse) protein is Cell division cycle-associated 7-like protein (Cdca7l).